The chain runs to 368 residues: Ferrochelatase (368 aa).

Fe cation is bound by residues His-209 and Glu-290. The interval 347–368 (REEQEQQAHISREEARRLGADQ) is disordered.

It belongs to the ferrochelatase family.

It is found in the cytoplasm. It catalyses the reaction heme b + 2 H(+) = protoporphyrin IX + Fe(2+). The protein operates within porphyrin-containing compound metabolism; protoheme biosynthesis; protoheme from protoporphyrin-IX: step 1/1. Catalyzes the ferrous insertion into protoporphyrin IX. This is Ferrochelatase from Janthinobacterium sp. (strain Marseille) (Minibacterium massiliensis).